Reading from the N-terminus, the 353-residue chain is ATP-dependent kinase YFH7 (353 aa).

Gly-31–Thr-39 serves as a coordination point for ATP.

The protein belongs to the YFH7 family.

ATP-dependent kinase that could be involved in endoplasmic reticulum membrane assembly. The polypeptide is ATP-dependent kinase YFH7 (YFH7) (Saccharomyces cerevisiae (strain ATCC 204508 / S288c) (Baker's yeast)).